Reading from the N-terminus, the 352-residue chain is PDZ and LIM domain protein 2 (352 aa).

The PDZ domain maps to 1 to 84 (MALTVDVAGP…PLRLQLDRSQ (84 aa)). 2 disordered regions span residues 69–95 (IRQSPSPLRLQLDRSQAASPGQTNGDS) and 108–141 (VRTHTESHSSLRSSYSSPTSLSPRAGSPFSPPPF). The segment covering 81 to 95 (DRSQAASPGQTNGDS) has biased composition (polar residues). Residues 117–135 (SLRSSYSSPTSLSPRAGSP) show a composition bias toward low complexity. A Phosphoserine modification is found at Ser124. Thr126 bears the Phosphothreonine mark. Phosphoserine occurs at positions 127, 129, 134, 137, 143, 161, 197, 203, 213, and 266. Disordered regions lie at residues 170-214 (LSYS…GGSL) and 253-275 (ERGGTPAFLPSSLSPQSSLPASR). A compositionally biased stretch (low complexity) spans 258-275 (PAFLPSSLSPQSSLPASR). Positions 284–344 (HTCEKCSTSI…EKHARQRYSA (61 aa)) constitute an LIM zinc-binding domain.

In terms of assembly, interacts with alpha-actinins ACTN1 and ACTN4, FLNA and MYH9. Interacts (via LIM zinc-binding domain) with MKRN2.

It localises to the cytoplasm. Its subcellular location is the cytoskeleton. Functionally, probable adapter protein located at the actin cytoskeleton that promotes cell attachment. Necessary for the migratory capacity of epithelial cells. Overexpression enhances cell adhesion to collagen and fibronectin and suppresses anchorage independent growth. May contribute to tumor cell migratory capacity. This chain is PDZ and LIM domain protein 2 (PDLIM2), found in Macaca fascicularis (Crab-eating macaque).